Consider the following 1118-residue polypeptide: Collagenase ColG (1118 aa).

Residues 1-45 (MKKNILKILMDSYSKESKIQTVRRVTSVSLLAVYLTMNTSSLVLA) form the signal peptide. The propeptide occupies 46–110 (KPIENTNDTS…KSKSTLRSAS (65 aa)). Residues 111 to 786 (IANTNSEKYD…QYDVVFHGVL (676 aa)) form an S1 metalloprotease domain, degrades both FALGPA (furylacryloyl-Leu-Gly-Pro-Ala) and type I collagen region. The tract at residues 119 to 388 (YDFEYLNGLS…AMERITWDYD (270 aa)) is activator domain required for full activity on collagen. The catalytic subdomain stretch occupies residues 389-670 (GIGSNGKKVD…IQELADKYQG (282 aa)). Residues 396-1118 (KVDHDKFLDD…SGNYELRVNK (723 aa)) are degrades soluble FALGPA peptide (furylacryloyl-Leu-Gly-Pro-Ala) but not type I collagen. Ca(2+) is bound at residue glutamate 498. Histidine 523 provides a ligand contact to Zn(2+). Residue glutamate 524 is part of the active site. Histidine 527 lines the Zn(2+) pocket. Alanine 531, valine 535, and glycine 537 together coordinate Ca(2+). A Zn(2+)-binding site is contributed by glutamate 555. The helper subdomain stretch occupies residues 679 to 790 (DYLKDHGYKK…VFHGVLTDNA (112 aa)). Residues 787–882 (TDNADISNNK…SFTIEIKNED (96 aa)) are S2 domain. Ca(2+) is bound by residues asparagine 795, lysine 796, aspartate 823, aspartate 825, aspartate 864, glutamate 890, glutamate 892, asparagine 894, aspartate 913, aspartate 918, alanine 920, aspartate 921, glutamate 1009, glutamate 1011, asparagine 1013, aspartate 1014, serine 1032, aspartate 1037, arginine 1039, and aspartate 1040. The region spanning 797–885 (APIAKVTGPS…IEIKNEDTTT (89 aa)) is the PKD domain. An S3a collagen-binding domain region spans residues 886–1003 (PITKEMEPND…SYSLNIKGLG (118 aa)). The segment at 1008–1118 (KEKENNDSSD…SGNYELRVNK (111 aa)) is S3b collagen-binding domain. The segment at 1102–1106 (LVYKY) is collagen-binding.

It belongs to the peptidase M9B family. Collagenase subfamily. It depends on Ca(2+) as a cofactor. Zn(2+) is required as a cofactor. In terms of processing, upon purification gives 67 kDa, 78 kDa, 82 kDa and 116 kDa (full-length) proteins all of which have the same N-terminus; only the longest form digests insoluble collagen. At least 2 in vivo isolated forms (C1b and C1c) are missing the second collagen-binding domain, ending on Lys-1006 and Lys-1018 respectively.

Its subcellular location is the secreted. The enzyme catalyses Digestion of native collagen in the triple helical region at Xaa-|-Gly bonds. With synthetic peptides, a preference is shown for Gly at P3 and P1', Pro and Ala at P2 and P2', and hydroxyproline, Ala or Arg at P3'.. With respect to regulation, inhibited by 1-10-phenanthroline. Inhibited by peptidomimetic isoamyl-phosphonyl-Gly-Pro-Ala, which binds to Zn(2+). Inhibited by broad-spectrum zinc metalloprotease inhibitor batimastat. N-aryl mercaptoacetamide-based inhibitors have been isolated that act on clostridial collagenases with submicromolar affinity while having negligibile activity on human collagenases. Its function is as follows. Clostridial collagenases are among the most efficient degraders of eukaryotic collagen known; saprophytes use collagen as a carbon source while pathogens additionally digest collagen to aid in host colonization. Has both tripeptidylcarboxypeptidase on Gly-X-Y and endopeptidase activities; the endopeptidase cuts within the triple helix region of collagen while tripeptidylcarboxypeptidase successively digests the exposed ends, thus clostridial collagenases can digest large sections of collagen. Active on soluble type I collagen, insoluble collagen, azocoll, soluble PZ-peptide (all collagenase substrates) and gelatin. The full-length protein has collagenase activity, while the in vivo derived C-terminally truncated shorter versions only act on gelatin. In vitro digestion of soluble calf skin collagen fibrils requires both ColG and ColH; ColG forms missing the second collagen-binding domain are also synergistic with ColH, although their overall efficiency is decreased. The activator domain (residues 119-388) and catalytic subdomain (389-670) open and close around substrate using a Gly-rich hinge (387-397), allowing digestion when the protein is closed. Binding of collagen requires Ca(2+) and is inhibited by EGTA; the collagen-binding domain (CBD, S3a plus S3b) specifically recognizes the triple-helical conformation made by 3 collagen protein chains in the triple-helical region. Isolated CBD (S3a plus S3b) binds collagen fibrils and sheets of many tissues. The chain is Collagenase ColG from Hathewaya histolytica (Clostridium histolyticum).